A 919-amino-acid polypeptide reads, in one-letter code: Glutamate receptor ionotropic, kainate 3 (919 aa).

Positions 1–31 (MTAPWRRLRSLVWEYWAGFLVCAFWIPDSRG) are cleaved as a signal peptide. Residues 32–563 (MPHVIRIGGI…VFSFLNPLSP (532 aa)) are Extracellular-facing. N-linked (GlcNAc...) asparagine glycans are attached at residues N70, N76, N278, N381, N415, N426, and N433. The cysteines at positions 99 and 350 are disulfide-linked. Positions 518, 520, and 525 each coordinate L-glutamate. 2 N-linked (GlcNAc...) asparagine glycosylation sites follow: N548 and N551. A helical membrane pass occupies residues 564 to 584 (DIWMYVLLAYLGVSCVLFVIA). Residues 585-636 (RFSPYEWYDAHPCNPGSEVVENNFTLLNSFWFGMGSLMQQGSELMPKALSTR) are Cytoplasmic-facing. Residues 637-657 (IIGGIWWFFTLIIISSYTANL) traverse the membrane as a helical segment. Residues 658 to 820 (AAFLTVERME…KEASALGIQK (163 aa)) are Extracellular-facing. Positions 691, 692, and 739 each coordinate L-glutamate. An N-linked (GlcNAc...) asparagine glycan is attached at N752. Residues 821 to 841 (IGGIFIVLAAGLVLSVLVAVG) traverse the membrane as a helical segment. Residues 842–919 (EFIYKLRKTA…CSTSLAPVFP (78 aa)) lie on the Cytoplasmic side of the membrane. A Phosphoserine modification is found at S869. A Glycyl lysine isopeptide (Lys-Gly) (interchain with G-Cter in SUMO1) cross-link involves residue K887.

Belongs to the glutamate-gated ion channel (TC 1.A.10.1) family. GRIK3 subfamily. Homotetramer, and heterotetramer with either GRIK4 or GRIK5. Can form functional heteromeric receptors with GRIK2. Interacts with PRKCABP. Interacts with NETO2. In terms of tissue distribution, detected in whole brain, cerebellum, brain cortex and hippocampus.

Its subcellular location is the cell membrane. It is found in the postsynaptic cell membrane. The enzyme catalyses Ca(2+)(in) = Ca(2+)(out). Glutamate-gated receptor activity inhibited by spermine. Ionotropic glutamate receptor that functions as a cation-permeable ligand-gated ion channel, gated by L-glutamate and the glutamatergic agonist kainic acid. Binding of the excitatory neurotransmitter L-glutamate induces a conformation change, leading to the opening of the cation channel, and thereby converts the chemical signal to an electrical impulse. The receptor then desensitizes rapidly and enters a transient inactive state, characterized by the presence of bound agonist. In association with GRIK2, involved in presynaptic facilitation of glutamate release at hippocampal mossy fiber synapses. The chain is Glutamate receptor ionotropic, kainate 3 (Grik3) from Mus musculus (Mouse).